A 320-amino-acid chain; its full sequence is tRNA(Ile)-lysidine synthase (320 aa).

ATP is bound at residue 33-38 (SGGPDS).

This sequence belongs to the tRNA(Ile)-lysidine synthase family.

The protein resides in the cytoplasm. It carries out the reaction cytidine(34) in tRNA(Ile2) + L-lysine + ATP = lysidine(34) in tRNA(Ile2) + AMP + diphosphate + H(+). In terms of biological role, ligates lysine onto the cytidine present at position 34 of the AUA codon-specific tRNA(Ile) that contains the anticodon CAU, in an ATP-dependent manner. Cytidine is converted to lysidine, thus changing the amino acid specificity of the tRNA from methionine to isoleucine. This chain is tRNA(Ile)-lysidine synthase, found in Mycolicibacterium paratuberculosis (strain ATCC BAA-968 / K-10) (Mycobacterium paratuberculosis).